The following is a 201-amino-acid chain: Recombination protein RecR (201 aa).

The C4-type zinc finger occupies 60–75; it reads CSVCGNIDTTDPCSIC. The region spanning 83 to 178 is the Toprim domain; sequence GTIIVVEDIS…KITRLAHGVP (96 aa).

It belongs to the RecR family.

Functionally, may play a role in DNA repair. It seems to be involved in an RecBC-independent recombinational process of DNA repair. It may act with RecF and RecO. In Bartonella bacilliformis (strain ATCC 35685 / KC583 / Herrer 020/F12,63), this protein is Recombination protein RecR.